We begin with the raw amino-acid sequence, 317 residues long: Transaldolase (317 aa).

The Schiff-base intermediate with substrate role is filled by Lys-126.

Belongs to the transaldolase family. Type 1 subfamily. In terms of assembly, homodimer.

Its subcellular location is the cytoplasm. It carries out the reaction D-sedoheptulose 7-phosphate + D-glyceraldehyde 3-phosphate = D-erythrose 4-phosphate + beta-D-fructose 6-phosphate. The protein operates within carbohydrate degradation; pentose phosphate pathway; D-glyceraldehyde 3-phosphate and beta-D-fructose 6-phosphate from D-ribose 5-phosphate and D-xylulose 5-phosphate (non-oxidative stage): step 2/3. Its function is as follows. Transaldolase is important for the balance of metabolites in the pentose-phosphate pathway. This Burkholderia ambifaria (strain MC40-6) protein is Transaldolase.